The sequence spans 297 residues: 4-hydroxy-tetrahydrodipicolinate synthase (297 aa).

Pyruvate is bound at residue threonine 47. The Proton donor/acceptor role is filled by tyrosine 136. Lysine 165 serves as the catalytic Schiff-base intermediate with substrate. A pyruvate-binding site is contributed by threonine 206.

It belongs to the DapA family. In terms of assembly, homotetramer; dimer of dimers.

It is found in the cytoplasm. It catalyses the reaction L-aspartate 4-semialdehyde + pyruvate = (2S,4S)-4-hydroxy-2,3,4,5-tetrahydrodipicolinate + H2O + H(+). Its pathway is amino-acid biosynthesis; L-lysine biosynthesis via DAP pathway; (S)-tetrahydrodipicolinate from L-aspartate: step 3/4. Its function is as follows. Catalyzes the condensation of (S)-aspartate-beta-semialdehyde [(S)-ASA] and pyruvate to 4-hydroxy-tetrahydrodipicolinate (HTPA). This chain is 4-hydroxy-tetrahydrodipicolinate synthase, found in Sulfurovum sp. (strain NBC37-1).